The primary structure comprises 227 residues: 2,3-bisphosphoglycerate-dependent phosphoglycerate mutase (227 aa).

Residues 7–14 (RHGFSEWN), 20–21 (TG), R59, 86–89 (ERHY), K97, 113–114 (RR), and 182–183 (GN) each bind substrate. The active-site Tele-phosphohistidine intermediate is the H8. E86 functions as the Proton donor/acceptor in the catalytic mechanism.

The protein belongs to the phosphoglycerate mutase family. BPG-dependent PGAM subfamily. Homodimer.

It carries out the reaction (2R)-2-phosphoglycerate = (2R)-3-phosphoglycerate. It functions in the pathway carbohydrate degradation; glycolysis; pyruvate from D-glyceraldehyde 3-phosphate: step 3/5. Its function is as follows. Catalyzes the interconversion of 2-phosphoglycerate and 3-phosphoglycerate. In Haemophilus influenzae (strain PittGG), this protein is 2,3-bisphosphoglycerate-dependent phosphoglycerate mutase.